Consider the following 315-residue polypeptide: Probable mannose-6-phosphate isomerase GmuF (315 aa).

Gln95, His97, Glu115, and His172 together coordinate Zn(2+). The active site involves Arg192.

This sequence belongs to the mannose-6-phosphate isomerase type 1 family. Requires Zn(2+) as cofactor.

The catalysed reaction is D-mannose 6-phosphate = D-fructose 6-phosphate. Functionally, seems to be involved in the degradation of glucomannan. The chain is Probable mannose-6-phosphate isomerase GmuF (gmuF) from Bacillus subtilis (strain 168).